Reading from the N-terminus, the 504-residue chain is Maturase K (504 aa).

It belongs to the intron maturase 2 family. MatK subfamily.

The protein localises to the plastid. Its subcellular location is the chloroplast. Usually encoded in the trnK tRNA gene intron. Probably assists in splicing its own and other chloroplast group II introns. This chain is Maturase K, found in Taxus baccata (English yew).